A 729-amino-acid polypeptide reads, in one-letter code: Sodium-dependent neutral amino acid transporter B(0)AT2 (729 aa).

The Cytoplasmic portion of the chain corresponds to 1-69 (MPKNSKVVKR…ERPAWNSKLQ (69 aa)). Phosphoserine occurs at positions 25 and 55. The disordered stretch occupies residues 42 to 61 (DVQEEKDTDAEDGSEADDER). Over residues 43–59 (VQEEKDTDAEDGSEADD) the composition is skewed to acidic residues. 3 helical membrane passes run 70–90 (YILA…FPYL), 98–117 (AYLL…LFFL), and 142–162 (GIGF…NVII). Over 163 to 225 (GWTLFYFSQS…SSISDSGGLN (63 aa)) the chain is Extracellular. Asparagine 187 is a glycosylation site (N-linked (GlcNAc...) asparagine). Helical transmembrane passes span 226–244 (WKMT…LAMI) and 253–270 (IMYF…CFLI). An N-linked (GlcNAc...) asparagine glycan is attached at asparagine 276. 2 helical membrane passes run 306–323 (VFFA…FSSY) and 335–356 (VLVS…FAVL). The Extracellular portion of the chain corresponds to 357-452 (GFKANIVNEK…FIAFTEAMTH (96 aa)). N-linked (GlcNAc...) asparagine glycosylation is found at asparagine 383 and asparagine 394. 5 helical membrane passes run 453 to 472 (FPAS…NLGL), 496 to 514 (ILTV…IFVQ), 530 to 550 (TLPL…VYGI), 571 to 592 (YMWK…IVNM), and 620 to 642 (VVCF…IRRC). The Cytoplasmic segment spans residues 643–729 (NLIDDSSGNL…DMPDMPESDL (87 aa)). Serine 687, serine 699, and serine 701 each carry phosphoserine.

This sequence belongs to the sodium:neurotransmitter symporter (SNF) (TC 2.A.22) family. SLC6A15 subfamily. Significant expressed in brain, lung and kidney. In brain, mainly expressed int the cortex, the cerebellum and the brain stem.

The protein localises to the membrane. The catalysed reaction is L-pipecolate(in) + Na(+)(in) = L-pipecolate(out) + Na(+)(out). It catalyses the reaction L-leucine(in) + Na(+)(in) = L-leucine(out) + Na(+)(out). The enzyme catalyses L-isoleucine(in) + Na(+)(in) = L-isoleucine(out) + Na(+)(out). It carries out the reaction L-methionine(in) + Na(+)(in) = L-methionine(out) + Na(+)(out). The catalysed reaction is L-proline(in) + Na(+)(in) = L-proline(out) + Na(+)(out). It catalyses the reaction L-alanine(in) + Na(+)(in) = L-alanine(out) + Na(+)(out). The enzyme catalyses L-asparagine(in) + Na(+)(in) = L-asparagine(out) + Na(+)(out). It carries out the reaction L-valine(in) + Na(+)(in) = L-valine(out) + Na(+)(out). The catalysed reaction is L-cysteine(in) + Na(+)(in) = L-cysteine(out) + Na(+)(out). It catalyses the reaction L-glutamine(in) + Na(+)(in) = L-glutamine(out) + Na(+)(out). The enzyme catalyses L-serine(in) + Na(+)(in) = L-serine(out) + Na(+)(out). It carries out the reaction L-threonine(in) + Na(+)(in) = L-threonine(out) + Na(+)(out). The catalysed reaction is L-phenylalanine(in) + Na(+)(in) = L-phenylalanine(out) + Na(+)(out). Its function is as follows. Functions as a sodium-dependent neutral amino acid transporter. Exhibits preference for methionine and for the branched-chain amino acids, particularly leucine, valine and isoleucine. Can also transport low-affinity substrates such as alanine, phenylalanine, glutamine and pipecolic acid. Mediates the saturable, pH-sensitive and electrogenic cotransport of proline and sodium ions with a stoichiometry of 1:1. May have a role as transporter for neurotransmitter precursors into neurons. In contrast to other members of the neurotransmitter transporter family, does not appear to be chloride-dependent. In Mus musculus (Mouse), this protein is Sodium-dependent neutral amino acid transporter B(0)AT2 (Slc6a15).